We begin with the raw amino-acid sequence, 89 residues long: Small ribosomal subunit protein uS14A (89 aa).

It belongs to the universal ribosomal protein uS14 family. As to quaternary structure, part of the 30S ribosomal subunit. Contacts proteins S3 and S10.

Functionally, binds 16S rRNA, required for the assembly of 30S particles and may also be responsible for determining the conformation of the 16S rRNA at the A site. The chain is Small ribosomal subunit protein uS14A from Limosilactobacillus reuteri (strain DSM 20016) (Lactobacillus reuteri).